A 317-amino-acid polypeptide reads, in one-letter code: MPALGSQRRLLGSLNCTPPATLPFTLAPNRTGPQCLEVSIPDGLFLSLGLVSLVENVLVVAAIAKNRNLHSPMYYFICCLAVSDLLVSVSNVLETAVMLLLEAGVLATQAAVVQQLDNVIDVLICGSMVSSLCFLGAIAVDRYISIFYALRYHSVVTLPRAWRIIAAIWVASILTSLLFITYYNHKVILLCLVGLFIAMLALMAVLYVHMLARACQHARGIARLQKRQRPIHQGFGLKGAATLTILLGVFFLCWGPFFLHLSLIVLCPQHPTCGCIFKNFNLFLALIICNAIVDPLIYAFRSQELRKTLQEVLQCSW.

The Extracellular portion of the chain corresponds to 1–37 (MPALGSQRRLLGSLNCTPPATLPFTLAPNRTGPQCLE). Asn-29 is a glycosylation site (N-linked (GlcNAc...) asparagine). Residues 38 to 63 (VSIPDGLFLSLGLVSLVENVLVVAAI) form a helical membrane-spanning segment. At 64-72 (AKNRNLHSP) the chain is on the cytoplasmic side. Residues 73–93 (MYYFICCLAVSDLLVSVSNVL) traverse the membrane as a helical segment. The Extracellular segment spans residues 94–118 (ETAVMLLLEAGVLATQAAVVQQLDN). A helical transmembrane segment spans residues 119 to 140 (VIDVLICGSMVSSLCFLGAIAV). Residues 141–163 (DRYISIFYALRYHSVVTLPRAWR) are Cytoplasmic-facing. The helical transmembrane segment at 164–183 (IIAAIWVASILTSLLFITYY) threads the bilayer. Residues 184–191 (NHKVILLC) lie on the Extracellular side of the membrane. Residues 192–211 (LVGLFIAMLALMAVLYVHML) form a helical membrane-spanning segment. Residues 212–240 (ARACQHARGIARLQKRQRPIHQGFGLKGA) lie on the Cytoplasmic side of the membrane. A helical transmembrane segment spans residues 241-266 (ATLTILLGVFFLCWGPFFLHLSLIVL). Over 267 to 279 (CPQHPTCGCIFKN) the chain is Extracellular. A helical transmembrane segment spans residues 280–300 (FNLFLALIICNAIVDPLIYAF). Over 301–317 (RSQELRKTLQEVLQCSW) the chain is Cytoplasmic. Cys-315 is lipidated: S-palmitoyl cysteine.

This sequence belongs to the G-protein coupled receptor 1 family. In terms of assembly, interacts with MGRN1, but does not undergo MGRN1-mediated ubiquitination; this interaction competes with GNAS-binding and thus inhibits agonist-induced cAMP production. Interacts with OPN3; the interaction results in a decrease in MC1R-mediated cAMP signaling and ultimately a decrease in melanin production in melanocytes. As to expression, highly expressed in the testis.

It is found in the cell membrane. Functionally, receptor for MSH (alpha, beta) and ACTH. Does not seem to be active with gamma-MSH. The activity of this receptor is mediated by G proteins which activate adenylate cyclase. Mediates melanogenesis, the production of eumelanin (black/brown) and phaeomelanin (red/yellow), via regulation of cAMP signaling in melanocytes. This chain is Melanocyte-stimulating hormone receptor (MC1R), found in Bos taurus (Bovine).